We begin with the raw amino-acid sequence, 1563 residues long: Pentafunctional AROM polypeptide (1563 aa).

Residues methionine 1–aspartate 382 are 3-dehydroquinate synthase. Residues aspartate 48 to asparagine 50, glutamate 82 to lysine 85, glycine 113 to valine 115, and aspartate 118 each bind NAD(+). Arginine 129 is a 7-phospho-2-dehydro-3-deoxy-D-arabino-heptonate binding site. Residue threonine 138 to threonine 139 coordinates NAD(+). Positions 145 and 151 each coordinate 7-phospho-2-dehydro-3-deoxy-D-arabino-heptonate. Lysine 160 contributes to the NAD(+) binding site. Asparagine 161 is a binding site for 7-phospho-2-dehydro-3-deoxy-D-arabino-heptonate. Residues phenylalanine 178–threonine 181 and asparagine 189 each bind NAD(+). Glutamate 193 provides a ligand contact to Zn(2+). Residues glutamate 193–lysine 196 and lysine 248 contribute to the 7-phospho-2-dehydro-3-deoxy-D-arabino-heptonate site. The Proton acceptor; for 3-dehydroquinate synthase activity role is filled by glutamate 258. Residues arginine 262–asparagine 266 and histidine 269 contribute to the 7-phospho-2-dehydro-3-deoxy-D-arabino-heptonate site. Residue histidine 269 participates in Zn(2+) binding. Histidine 273 serves as the catalytic Proton acceptor; for 3-dehydroquinate synthase activity. Residues histidine 285 and lysine 354 each coordinate 7-phospho-2-dehydro-3-deoxy-D-arabino-heptonate. Position 285 (histidine 285) interacts with Zn(2+). The EPSP synthase stretch occupies residues valine 395–serine 834. The For EPSP synthase activity role is filled by cysteine 816. Residues leucine 836–glutamate 850 show a composition bias toward basic and acidic residues. A disordered region spans residues leucine 836–proline 857. Residues proline 857–serine 1051 are shikimate kinase. An ATP-binding site is contributed by glycine 864–serine 871. The tract at residues leucine 1052 to glutamate 1265 is 3-dehydroquinase. Residue histidine 1168 is the Proton acceptor; for 3-dehydroquinate dehydratase activity of the active site. The active-site Schiff-base intermediate with substrate; for 3-dehydroquinate dehydratase activity is lysine 1196. Positions proline 1278–asparagine 1563 are shikimate dehydrogenase.

This sequence in the N-terminal section; belongs to the sugar phosphate cyclases superfamily. Dehydroquinate synthase family. It in the 2nd section; belongs to the EPSP synthase family. The protein in the 3rd section; belongs to the shikimate kinase family. In the 4th section; belongs to the type-I 3-dehydroquinase family. This sequence in the C-terminal section; belongs to the shikimate dehydrogenase family. As to quaternary structure, homodimer. Zn(2+) is required as a cofactor.

It localises to the cytoplasm. It carries out the reaction 7-phospho-2-dehydro-3-deoxy-D-arabino-heptonate = 3-dehydroquinate + phosphate. It catalyses the reaction 3-dehydroquinate = 3-dehydroshikimate + H2O. The enzyme catalyses shikimate + NADP(+) = 3-dehydroshikimate + NADPH + H(+). The catalysed reaction is shikimate + ATP = 3-phosphoshikimate + ADP + H(+). It carries out the reaction 3-phosphoshikimate + phosphoenolpyruvate = 5-O-(1-carboxyvinyl)-3-phosphoshikimate + phosphate. It participates in metabolic intermediate biosynthesis; chorismate biosynthesis; chorismate from D-erythrose 4-phosphate and phosphoenolpyruvate: step 2/7. The protein operates within metabolic intermediate biosynthesis; chorismate biosynthesis; chorismate from D-erythrose 4-phosphate and phosphoenolpyruvate: step 3/7. Its pathway is metabolic intermediate biosynthesis; chorismate biosynthesis; chorismate from D-erythrose 4-phosphate and phosphoenolpyruvate: step 4/7. It functions in the pathway metabolic intermediate biosynthesis; chorismate biosynthesis; chorismate from D-erythrose 4-phosphate and phosphoenolpyruvate: step 5/7. It participates in metabolic intermediate biosynthesis; chorismate biosynthesis; chorismate from D-erythrose 4-phosphate and phosphoenolpyruvate: step 6/7. Functionally, the AROM polypeptide catalyzes 5 consecutive enzymatic reactions in prechorismate polyaromatic amino acid biosynthesis. In Sordaria macrospora (strain ATCC MYA-333 / DSM 997 / K(L3346) / K-hell), this protein is Pentafunctional AROM polypeptide.